The following is a 575-amino-acid chain: Glycine--tRNA ligase (575 aa).

The substrate site is built by arginine 96 and glutamate 162. ATP-binding positions include 194 to 196, 204 to 209, 327 to 328, and 450 to 453; these read RNE, IRLREF, EC, and GIDR. Residue 209 to 213 participates in substrate binding; the sequence is FTQAE. 446-450 lines the substrate pocket; the sequence is EPSYG.

The protein belongs to the class-II aminoacyl-tRNA synthetase family.

The protein localises to the cytoplasm. The catalysed reaction is tRNA(Gly) + glycine + ATP = glycyl-tRNA(Gly) + AMP + diphosphate. Catalyzes the attachment of glycine to tRNA(Gly). In Methanococcus maripaludis (strain C5 / ATCC BAA-1333), this protein is Glycine--tRNA ligase.